The chain runs to 140 residues: Small ribosomal subunit protein uS11c (140 aa).

The protein belongs to the universal ribosomal protein uS11 family. Part of the 30S ribosomal subunit.

It localises to the plastid. The protein resides in the chloroplast. This chain is Small ribosomal subunit protein uS11c, found in Pelargonium hortorum (Common geranium).